We begin with the raw amino-acid sequence, 95 residues long: MASETVSNHQEKALALLQADAEKILRLIKVQMDHLTMPQCPLYEEVLDTQMFGLSREVDFAVRLGLIAEEQGKAMLGELERELSALHEAFTNKQQ.

This sequence belongs to the UPF0358 family.

This is UPF0358 protein BT9727_3692 from Bacillus thuringiensis subsp. konkukian (strain 97-27).